A 310-amino-acid polypeptide reads, in one-letter code: p-hydroxybenzoic acid efflux pump subunit AaeA (310 aa).

The helical transmembrane segment at 12-32 threads the bilayer; that stretch reads AITVVLVILAFIAIFNAWVYY.

This sequence belongs to the membrane fusion protein (MFP) (TC 8.A.1) family.

Its subcellular location is the cell inner membrane. Functionally, forms an efflux pump with AaeB. The sequence is that of p-hydroxybenzoic acid efflux pump subunit AaeA from Escherichia coli O7:K1 (strain IAI39 / ExPEC).